Reading from the N-terminus, the 406-residue chain is Histidine--tRNA ligase (406 aa).

The protein belongs to the class-II aminoacyl-tRNA synthetase family. Homodimer.

Its subcellular location is the cytoplasm. It carries out the reaction tRNA(His) + L-histidine + ATP = L-histidyl-tRNA(His) + AMP + diphosphate + H(+). In Nitratiruptor sp. (strain SB155-2), this protein is Histidine--tRNA ligase.